The sequence spans 177 residues: Biotin-dependent acetyl-/propionyl-coenzyme A carboxylase epsilon subunit (177 aa).

The segment at 1–112 (MGTCPCESSE…TEKPLHPHEP (112 aa)) is disordered. Polar residues predominate over residues 18–100 (VSGTNEVSDG…SDGNETNNPA (83 aa)).

In terms of assembly, interacts with the AccA3/AccD5 biotin-dependent acyl-CoA carboxylase complex. Interacts with the AccA3/AccD6 complex. Is also part of the long-chain acyl-CoA carboxylase (LCC) complex, which is composed of AccA3, AccD4, AccD5 and AccE5. The four subunits are essential for activity, but AccD5, together with AccE5, probably plays a structural role rather than a catalytic one.

Functionally, stimulates activity of the AccA3/AccD5 biotin-dependent acyl-CoA carboxylase complex. Interacts with AccD5 and modulates its carboxylase activity for acetyl-CoA and propionyl-CoA. Inhibits activity of the AccA3/AccD6 complex. Is also required for the activity of the long-chain acyl-CoA carboxylase (LCC) complex. This is Biotin-dependent acetyl-/propionyl-coenzyme A carboxylase epsilon subunit from Mycobacterium tuberculosis (strain ATCC 25618 / H37Rv).